Consider the following 953-residue polypeptide: Dual serine/threonine and tyrosine protein kinase (953 aa).

The region spanning 665 to 926 (PKLEREIGRG…VQSKLQDIYT (262 aa)) is the Protein kinase domain. ATP-binding positions include 671-679 (IGRGQYGVV) and lysine 694. Aspartate 791 functions as the Proton acceptor in the catalytic mechanism. The disordered stretch occupies residues 932-953 (REAEGGGGGGAKEQQNLKSDTL).

Belongs to the protein kinase superfamily. Ser/Thr protein kinase family.

The protein resides in the cytoplasm. The protein localises to the cell membrane. Its subcellular location is the apical cell membrane. It is found in the basolateral cell membrane. It localises to the cell junction. It carries out the reaction L-seryl-[protein] + ATP = O-phospho-L-seryl-[protein] + ADP + H(+). The catalysed reaction is L-threonyl-[protein] + ATP = O-phospho-L-threonyl-[protein] + ADP + H(+). It catalyses the reaction L-tyrosyl-[protein] + ATP = O-phospho-L-tyrosyl-[protein] + ADP + H(+). Its function is as follows. May act as a positive regulator of ERK phosphorylation downstream of fibroblast growth factor-receptor activation. May induce both caspase-dependent apoptosis and caspase-independent cell death. May play a role in the embryonic development. This is Dual serine/threonine and tyrosine protein kinase from Strongylocentrotus purpuratus (Purple sea urchin).